A 697-amino-acid polypeptide reads, in one-letter code: MSKKLENIRNIGICAHIDAGKTTTTERILYYTGKSHKIGEVHEGGATMDWMEQEQERGITITSAATTCRWQDKQINIIDTPGHVDFTIEVERSLRVLDGAVAVFDGVAGVEPQSETVWRQADKYNVPRMCFVNKMDRMGADFYRCVDMIKDRLGAKPLVIQLPIGIEENFKGVVDLVKMQAVVWKDESLGAEYSYQEIPDDMKAKAEEYRANLLDMVVELDDKIMEKYLSGEEVTEEEIKKLIRKGTISAAFYPVLCGSAFKNKGVQPLLDAVVDYLPSPIDIATVKGVEVSTGEEKDFPISVSEPFSALAFKIMNDPFVGSLTFIRVYSGKITSGTTVINTVKNKREKIGRMLLMHANNREDVKEASAGDIVALAGLKDTTTGDTLSDEDKKVILERMEFPEPVIELAVEPKSKVDQEKMGLALSRLAAEDPSFRTSTDQETGQTVIKGMGELHLEIIIDRMRREFKVEANIGAPQVAYRETITKACEIDYTHKKQSGGAGQFARVKIIFEPLKDVKDLKEEDKNKSFIFESKIVGGAVPKEYIPGVEKGLNNIRETGVIAGYPMIDFKATLIDGAFHDVDSSVLAFEIAAKAAFREGMPKGNPKLLEPIMKVEVITPDEYMGDVIGDLNSRRGQVQGMEPRGNAQVIKAYVPLAEMFGYVNTLRSLSQGRAQYSMVFNHYDQVPTQVADTIKAKK.

Residues E6–I281 form the tr-type G domain. Residues A15–T22, D79–H83, and N133–D136 contribute to the GTP site.

Belongs to the TRAFAC class translation factor GTPase superfamily. Classic translation factor GTPase family. EF-G/EF-2 subfamily.

Its subcellular location is the cytoplasm. In terms of biological role, catalyzes the GTP-dependent ribosomal translocation step during translation elongation. During this step, the ribosome changes from the pre-translocational (PRE) to the post-translocational (POST) state as the newly formed A-site-bound peptidyl-tRNA and P-site-bound deacylated tRNA move to the P and E sites, respectively. Catalyzes the coordinated movement of the two tRNA molecules, the mRNA and conformational changes in the ribosome. This Rickettsia bellii (strain OSU 85-389) protein is Elongation factor G.